The chain runs to 432 residues: 3-phosphoshikimate 1-carboxyvinyltransferase (432 aa).

3-phosphoshikimate contacts are provided by Lys-23, Ser-24, and Arg-28. Lys-23 contributes to the phosphoenolpyruvate binding site. Phosphoenolpyruvate-binding residues include Gly-99 and Arg-127. Ser-172, Ser-173, Gln-174, Ser-200, Asp-317, Asn-341, and Lys-345 together coordinate 3-phosphoshikimate. Phosphoenolpyruvate is bound at residue Gln-174. Asp-317 functions as the Proton acceptor in the catalytic mechanism. Phosphoenolpyruvate-binding residues include Arg-349, Arg-391, and Lys-416.

It belongs to the EPSP synthase family. In terms of assembly, monomer.

It is found in the cytoplasm. The catalysed reaction is 3-phosphoshikimate + phosphoenolpyruvate = 5-O-(1-carboxyvinyl)-3-phosphoshikimate + phosphate. It participates in metabolic intermediate biosynthesis; chorismate biosynthesis; chorismate from D-erythrose 4-phosphate and phosphoenolpyruvate: step 6/7. In terms of biological role, catalyzes the transfer of the enolpyruvyl moiety of phosphoenolpyruvate (PEP) to the 5-hydroxyl of shikimate-3-phosphate (S3P) to produce enolpyruvyl shikimate-3-phosphate and inorganic phosphate. The polypeptide is 3-phosphoshikimate 1-carboxyvinyltransferase (Blochmanniella pennsylvanica (strain BPEN)).